The chain runs to 748 residues: MAADKAGEQGAEKHEDSANCSGISDHEKELSRSALQAFTAGNYEACLQHLGELKEINKDDYKVILNSAVAEFYKSDQTTTDLLKQTLNQLRNEVHSAIDEIDSLDDVENSMLYYNQAVILYYLRQHMEAISIGEKLYQFIEPFKEKFAHAVCFLLVDLYLLTFQTEKALHLLVVLEKMILQGHSNNKNGKNNETNSNANNREPFAQRGDGGVHVEAAKSKIHQYKVRAYIQMKSLKACKREIKSVMNTSGNSAPSLFLKSNFEYLRGNYRKAVKLLNSSNIAEYPGFMKTGECVRCMFWNNLGCIHFAMGKHNLGLFYFKKALQENDNTCAQLPSSNTDPGKKFSSRPMCTLLTNKRYELLYNCGIQLLHIGRPLAAFEYLIEAVQVYHSNPRLWLRLAECCIAANKGTSEQETKGLPSKKGIVQSIVGQGYHRKIVLASQSVQNLLYNDGESSAIPVASMEFAAICLRNALLLLPEDQFDAKQENGSKTSSQTGNTDSGGESSEVCSNKSHEGDKFIPAPPSSPLKRQEVENLRCSVLACSAYVGLALGDNLMALNHAEKLLQQPRLSGSLKFLGHLYAAEALISLDRISDAITHLNPENVTDVSLGVSSNEQEQGSDKGENEPMESVGKQMPQCYPSSVTSARTMMLFNLGSAYCLRSEYDKARKCLHQAASMIHPKEIPPEAILLAVYLELQNGNTQLALQIIKRNQLLPSIRMMSDLRKKPLFQTMHQPMQPIQMPAFTAVQRK.

Over residues 1–17 (MAADKAGEQGAEKHEDS) the composition is skewed to basic and acidic residues. 4 disordered regions span residues 1-25 (MAAD…GISD), 184-205 (SNNK…EPFA), 483-524 (KQEN…PPSS), and 605-635 (VSLG…QMPQ). A compositionally biased stretch (low complexity) spans 185-200 (NNKNGKNNETNSNANN). 2 stretches are compositionally biased toward polar residues: residues 487–509 (GSKT…VCSN) and 605–615 (VSLGVSSNEQE).

Belongs to the CNOT10 family. Component of the CCR4-NOT complex. cnot10 and cnot11 form a subcomplex docked to the cnot1 scaffold.

It localises to the cytoplasm. Its subcellular location is the nucleus. Functionally, component of the CCR4-NOT complex which is one of the major cellular mRNA deadenylases and is linked to various cellular processes including bulk mRNA degradation, miRNA-mediated repression, translational repression during translational initiation and general transcription regulation. Additional complex functions may be a consequence of its influence on mRNA expression. Is not required for association of CNOT7 to the CCR4-NOT complex. This Xenopus laevis (African clawed frog) protein is CCR4-NOT transcription complex subunit 10-A (cnot10-a).